A 541-amino-acid polypeptide reads, in one-letter code: Calcium/calmodulin-dependent protein kinase kinase (541 aa).

The tract at residues 83 to 106 (AVQEDDEAGPHSSNNLAATMSPNL) is disordered. Over residues 93 to 106 (HSSNNLAATMSPNL) the composition is skewed to polar residues. A Protein kinase domain is found at 130–411 (YRLMEEIGQG…LHEVKVHTWV (282 aa)). ATP is bound by residues 136-144 (IGQGSYGIV) and K159. Residues 169–190 (NFACFRQPPPRRNKENAAPSVL) form an RP domain region. The active-site Proton acceptor is the D276. Positions 437-442 (ENCVRV) are autoinhibitory domain. Residues 440–465 (VRVIPRLDTLILVKAMGHRKRFGNPF) form a calmodulin-binding region. A disordered region spans residues 462–512 (GNPFRNKLSAQSSIRDRRKSSSVKDPTYVPPPNSPPATSNNNLNSTKVDRP). Low complexity predominate over residues 497-507 (PATSNNNLNST).

It belongs to the protein kinase superfamily. Ser/Thr protein kinase family. The cofactor is Mg(2+). Expressed in head and tail neurons and vulval muscles.

The protein localises to the cytoplasm. The enzyme catalyses L-seryl-[protein] + ATP = O-phospho-L-seryl-[protein] + ADP + H(+). It carries out the reaction L-threonyl-[protein] + ATP = O-phospho-L-threonyl-[protein] + ADP + H(+). With respect to regulation, activated by Ca(2+)/calmodulin. Binding of calmodulin may relieve intrasteric autoinhibition. Calcium/calmodulin-dependent protein kinase which phosphorylates cmk-1. Component of a calcium-triggered signaling cascade involved in CRE-mediated transcriptional activation, probably through cmk-1-mediated crh-1/CREB phosphorylation. Plays a role in salt-avoidance learning behavior via the phosphorylation of cmk-1. The sequence is that of Calcium/calmodulin-dependent protein kinase kinase from Caenorhabditis elegans.